Here is a 250-residue protein sequence, read N- to C-terminus: 5'-nucleotidase SurE (250 aa).

Residues Asp-8, Asp-9, Ser-39, and Asn-91 each contribute to the a divalent metal cation site.

Belongs to the SurE nucleotidase family. It depends on a divalent metal cation as a cofactor.

Its subcellular location is the cytoplasm. It catalyses the reaction a ribonucleoside 5'-phosphate + H2O = a ribonucleoside + phosphate. In terms of biological role, nucleotidase that shows phosphatase activity on nucleoside 5'-monophosphates. This Leptospira borgpetersenii serovar Hardjo-bovis (strain L550) protein is 5'-nucleotidase SurE.